Reading from the N-terminus, the 246-residue chain is Ribonuclease PH (246 aa).

Phosphate is bound by residues Arg-91 and 129-131; that span reads GTR.

This sequence belongs to the RNase PH family. In terms of assembly, homohexameric ring arranged as a trimer of dimers.

It catalyses the reaction tRNA(n+1) + phosphate = tRNA(n) + a ribonucleoside 5'-diphosphate. Functionally, phosphorolytic 3'-5' exoribonuclease that plays an important role in tRNA 3'-end maturation. Removes nucleotide residues following the 3'-CCA terminus of tRNAs; can also add nucleotides to the ends of RNA molecules by using nucleoside diphosphates as substrates, but this may not be physiologically important. Probably plays a role in initiation of 16S rRNA degradation (leading to ribosome degradation) during starvation. This chain is Ribonuclease PH, found in Burkholderia orbicola (strain MC0-3).